We begin with the raw amino-acid sequence, 150 residues long: Thyroid hormone-inducible hepatic protein (150 aa).

The tract at residues 83-104 (KVAGNETSEAENDAAETEEAEE) is disordered. Ser90 bears the Phosphoserine mark. Residues 90–104 (SEAENDAAETEEAEE) are compositionally biased toward acidic residues.

Belongs to the SPOT14 family. In terms of assembly, homodimer. Heterodimer with MID1IP1. Interacts with THRB and PLAGL1. Mainly expressed in tissues that synthesize triglycerides.

The protein resides in the nucleus. It localises to the cytoplasm. In terms of biological role, plays a role in the regulation of lipogenesis, especially in lactating mammary gland. Important for the biosynthesis of triglycerides with medium-length fatty acid chains. May modulate lipogenesis by interacting with MID1IP1 and preventing its interaction with ACACA. May function as transcriptional coactivator. May modulate the transcription factor activity of THRB. The protein is Thyroid hormone-inducible hepatic protein (Thrsp) of Mus musculus (Mouse).